A 469-amino-acid chain; its full sequence is ATP synthase subunit beta (469 aa).

156–163 (GGAGVGKT) is an ATP binding site.

It belongs to the ATPase alpha/beta chains family. In terms of assembly, F-type ATPases have 2 components, CF(1) - the catalytic core - and CF(0) - the membrane proton channel. CF(1) has five subunits: alpha(3), beta(3), gamma(1), delta(1), epsilon(1). CF(0) has three main subunits: a(1), b(2) and c(9-12). The alpha and beta chains form an alternating ring which encloses part of the gamma chain. CF(1) is attached to CF(0) by a central stalk formed by the gamma and epsilon chains, while a peripheral stalk is formed by the delta and b chains.

The protein resides in the cell membrane. It carries out the reaction ATP + H2O + 4 H(+)(in) = ADP + phosphate + 5 H(+)(out). Functionally, produces ATP from ADP in the presence of a proton gradient across the membrane. The catalytic sites are hosted primarily by the beta subunits. This Bacillus cereus (strain AH820) protein is ATP synthase subunit beta.